The following is a 398-amino-acid chain: MPAKRKPVLPALTITPSPAEGPGPGGSAEANLVDLQKKLEELELDEQQKKRLEAFLTQKAKVGELKDDDFERISELGAGNGGVVTKVQHKPSGLIMARKLIHLEIKPAIRNQIIRELQVLHECNSPYIVGFYGAFYSDGEISICMEHMDGGSLDQVLKEAKRIPEEILGKVSIAVLRGLAYLREKHQIMHRDVKPSNILVNSRGEIKLCDFGVSGQLIDSMANSFVGTRSYMSPERLQGTHYSVQSDIWSMGLSLVELSIGRYPIPPPDSKELEAIFGRPVVDGAEGESHSVSPWARPPGRPISGHGMDSRPAMAIFELLDYIVNEPPPKLPNGVFTQDFQEFVNKCLIKNPAERADLKMLMNHTFIKRSEVEEVDFAGWLCKTLRLNQPSTPTRAAV.

The segment at 1–29 (MPAKRKPVLPALTITPSPAEGPGPGGSAE) is disordered. Residues 70–367 (FERISELGAG…LKMLMNHTFI (298 aa)) enclose the Protein kinase domain. ATP contacts are provided by residues 76 to 84 (LGAGNGGVV) and lysine 99. Residue aspartate 192 is the Proton acceptor of the active site. 2 positions are modified to phosphoserine; by RAF: serine 220 and serine 224.

The protein belongs to the protein kinase superfamily. STE Ser/Thr protein kinase family. MAP kinase kinase subfamily. Post-translationally, activated by phosphorylation on Ser/Thr catalyzed by MAP kinase kinase kinases (RAF).

It carries out the reaction L-seryl-[protein] + ATP = O-phospho-L-seryl-[protein] + ADP + H(+). The catalysed reaction is L-threonyl-[protein] + ATP = O-phospho-L-threonyl-[protein] + ADP + H(+). The enzyme catalyses L-tyrosyl-[protein] + ATP = O-phospho-L-tyrosyl-[protein] + ADP + H(+). Catalyzes the concomitant phosphorylation of a threonine and a tyrosine residue in a Thr-Glu-Tyr sequence located in MAP kinases. Activates the ERK1 and ERK2 MAP kinases. The polypeptide is Dual specificity mitogen-activated protein kinase kinase 2 (MAP2K2) (Gallus gallus (Chicken)).